We begin with the raw amino-acid sequence, 230 residues long: Claudin-2 (230 aa).

The Cytoplasmic segment spans residues 1–7 (MASLGLQ). The chain crosses the membrane as a helical span at residues 8-28 (LVGYVLGLLGLLGTVIAMLLP). Residues 29–81 (SWRTSSYVGASIVTAVGFSKGLWMECATHSTGITQCDIYSTMLGLPADIQAAQ) are Extracellular-facing. The cysteines at positions 54 and 64 are disulfide-linked. A helical transmembrane segment spans residues 82–102 (AMMVTSSAMSSLACIVSVVGM). Topologically, residues 103-116 (RCTVFFQESRAKDR) are cytoplasmic. The chain crosses the membrane as a helical span at residues 117–137 (VAVVGGVFFILGGLLGFIPVA). At 138-162 (WNLHGILRDFYSPLVPDSMKFEIGE) the chain is on the extracellular side. A helical membrane pass occupies residues 163 to 183 (ALYLGIISSLFSLIAGIFLCF). Residues 184-230 (SCSPQGNRSNYYDAYQAQPLATRSSPRPGQAPKGKSEFNSYSLTGYV) lie on the Cytoplasmic side of the membrane. Residues 205-230 (TRSSPRPGQAPKGKSEFNSYSLTGYV) are disordered. K218 is covalently cross-linked (Glycyl lysine isopeptide (Lys-Gly) (interchain with G-Cter in SUMO)). Phosphoserine occurs at positions 219 and 223. Polar residues predominate over residues 220–230 (EFNSYSLTGYV). The interaction with TJP1, TJP2 and TJP3 stretch occupies residues 229–230 (YV).

This sequence belongs to the claudin family. Can form homo- and heteropolymers with other claudins to mediate paracellular barrier and channel functions of tight junctions in response to physiological stimuli. Homopolymers interact with CLDN3, but not CLDN1, homopolymers. Directly interacts with TJP1/ZO-1, TJP2/ZO-2 and TJP3/ZO-3. In terms of processing, the disulfide bond is necessary for pore formation, but is not required for correct protein trafficking.

It localises to the cell junction. It is found in the tight junction. The protein localises to the cell membrane. It carries out the reaction Na(+)(in) = Na(+)(out). The enzyme catalyses K(+)(in) = K(+)(out). The catalysed reaction is Rb(+)(in) = Rb(+)(out). It catalyses the reaction Li(+)(in) = Li(+)(out). It carries out the reaction Cs(+)(in) = Cs(+)(out). The enzyme catalyses Ca(2+)(in) = Ca(2+)(out). The catalysed reaction is methylamine(out) = methylamine(in). It catalyses the reaction choline(out) = choline(in). It carries out the reaction H2O(in) = H2O(out). In terms of biological role, forms paracellular channels: polymerizes in tight junction strands with cation- and water-selective channels through the strands, conveying epithelial permeability in a process known as paracellular tight junction permeability. In intestinal epithelium, allows for sodium and water fluxes from the peritoneal side to the lumen of the intestine to regulate nutrient absorption and clear enteric pathogens as part of mucosal immune response. In kidney, allows passive sodium and calcium reabsorption across proximal tubules from the lumen back to the bloodstream. In the hepatobiliary tract, allows paracellular water and cation fluxes in the hepatic perivenous areas and biliary epithelium to generate bile flow and maintain osmotic gradients. This is Claudin-2 (CLDN2) from Bos taurus (Bovine).